The primary structure comprises 448 residues: GTPase Der (448 aa).

2 EngA-type G domains span residues 3–167 and 182–355; these read PVIA…EPPE and TRLA…ASAT. Residues 9–16, 56–60, 119–122, 188–195, 235–239, and 300–303 each bind GTP; these read GRPNVGKS, DTGGF, NKAE, DTAGL, and NKWD. The 85-residue stretch at 356–440 folds into the KH-like domain; that stretch reads RKLPTPQLTR…PMRIELRASH (85 aa).

This sequence belongs to the TRAFAC class TrmE-Era-EngA-EngB-Septin-like GTPase superfamily. EngA (Der) GTPase family. In terms of assembly, associates with the 50S ribosomal subunit.

Its function is as follows. GTPase that plays an essential role in the late steps of ribosome biogenesis. In Leptothrix cholodnii (strain ATCC 51168 / LMG 8142 / SP-6) (Leptothrix discophora (strain SP-6)), this protein is GTPase Der.